We begin with the raw amino-acid sequence, 347 residues long: 4-hydroxy-2-oxovalerate aldolase 1 (347 aa).

In terms of domain architecture, Pyruvate carboxyltransferase spans V11 to M263. R19 to D20 is a binding site for substrate. A Mn(2+)-binding site is contributed by D20. H23 functions as the Proton acceptor in the catalytic mechanism. Residues S173 and H202 each contribute to the substrate site. The Mn(2+) site is built by H202 and H204. Substrate is bound at residue Y293.

It belongs to the 4-hydroxy-2-oxovalerate aldolase family.

It catalyses the reaction (S)-4-hydroxy-2-oxopentanoate = acetaldehyde + pyruvate. The chain is 4-hydroxy-2-oxovalerate aldolase 1 (lapG) from Azoarcus sp. (strain BH72).